The following is a 304-amino-acid chain: MVLLILKFHGESVKIKPECAICIIRQVVDAANEITDDEREQFRLIKSTMEVIKDVYGESAVPAWMGTVVHRYLKKISNNNDPYKNLKEKANKIALQYLDKVREMSNTDDELERLRKKVLATIAGNVIDFGAYSTGINIEKLIEDTLNGELKIDNSRKLLNDLKDKNIKKILYICDNAGEIIFDRVLMEEIKKYDKDIVAVVKGKPILNDATLEDAKIAKIDEIAKVITTGSDIIGIILEECSEEFLKEFESADLIIAKGMGNYESLTEYEDKIDKPIYYILKAKCKPVAENIGVDVGDNVLLKR.

This is an uncharacterized protein from Methanocaldococcus jannaschii (strain ATCC 43067 / DSM 2661 / JAL-1 / JCM 10045 / NBRC 100440) (Methanococcus jannaschii).